A 66-amino-acid chain; its full sequence is Large ribosomal subunit protein bL33c (66 aa).

This sequence belongs to the bacterial ribosomal protein bL33 family.

It localises to the plastid. Its subcellular location is the chloroplast. The protein is Large ribosomal subunit protein bL33c of Ceratophyllum demersum (Rigid hornwort).